The sequence spans 369 residues: Uroporphyrinogen decarboxylase (369 aa).

Arg39, Ala41, Arg43, Arg52, Asp88, Tyr166, Ser221, and His341 together coordinate coproporphyrinogen I. Coproporphyrinogen III-binding residues include Arg39, Ala41, and Arg43. Positions 88, 166, 221, and 341 each coordinate coproporphyrinogen III.

This sequence belongs to the uroporphyrinogen decarboxylase family. Homodimer.

The protein localises to the cytoplasm. Its subcellular location is the cytosol. The enzyme catalyses uroporphyrinogen III + 4 H(+) = coproporphyrinogen III + 4 CO2. The catalysed reaction is uroporphyrinogen I + 4 H(+) = coproporphyrinogen I + 4 CO2. Its pathway is porphyrin-containing compound metabolism; protoporphyrin-IX biosynthesis; coproporphyrinogen-III from 5-aminolevulinate: step 4/4. Its function is as follows. Catalyzes the sequential decarboxylation of the four acetate side chains of uroporphyrinogen to form coproporphyrinogen and participates in the fifth step in the heme biosynthetic pathway. Isomer I or isomer III of uroporphyrinogen may serve as substrate, but only coproporphyrinogen III can ultimately be converted to heme. In vitro also decarboxylates pentacarboxylate porphyrinogen I. The polypeptide is Uroporphyrinogen decarboxylase (Danio rerio (Zebrafish)).